The following is a 429-amino-acid chain: MDVQETTAACRDAFAELASPACIHDPYPFMRWLREHDPVHRAASGLFLLSRHADIFWAFKATGDAFRGPAPGELARYFSRAATSPSLNLLASTLAMKDPPTHTRLRRLISRDFTMGQIDNLRPSIARIVAARLDGITPALERGEAVDLHREFALALPMLVFAELFGMPQDDMFELAAGIGTILEGLGPHASDPQLAAADAASARVQAYFGDLIQRKRTDPRRDIVSMLVGAHDDDADTLSDAELISMLWGMLLGGFVTTAASIDHAVLAMLAYPEQRHWLQADAARVRAFVEEVLRCDAPAMFSSIPRIAQRDIELGGVVIPKNADVRVLIASGNRDPDAFADPDRFDPARFYGTSPGMSTDGKIMLSFGHGIHFCLGAQLARVQLAESLPRIQARFPTLAFAGQPTREPSAFLRTFRTLPVRLHAQGS.

Residue Cys-376 coordinates heme.

The protein belongs to the cytochrome P450 family. The cofactor is heme.

Its function is as follows. Cytochromes P450 are a group of heme-thiolate monooxygenases. They oxidize a variety of structurally unrelated compounds, including steroids, fatty acids, and xenobiotics. This Bradyrhizobium diazoefficiens (strain JCM 10833 / BCRC 13528 / IAM 13628 / NBRC 14792 / USDA 110) protein is Cytochrome P450 BJ-3 (cyp114).